We begin with the raw amino-acid sequence, 186 residues long: MIEVNKFKPGITFQDSGNIYVVLEATHSKQGRGQANVKAKAKNLRTGATTILSFTGGDKVEPAHIEKRKMNFLYSDDSNIYLMDSSDYSQIEIDLLKVEWEMNFLKENSEVQVRMFQDEILDIELPANVDLKVTYAPDAVKGNTTTNPQKKVTLETNFELETPMFIKENDVIIVSTETGKYVGKSK.

This sequence belongs to the elongation factor P family.

The protein resides in the cytoplasm. It functions in the pathway protein biosynthesis; polypeptide chain elongation. Functionally, involved in peptide bond synthesis. Stimulates efficient translation and peptide-bond synthesis on native or reconstituted 70S ribosomes in vitro. Probably functions indirectly by altering the affinity of the ribosome for aminoacyl-tRNA, thus increasing their reactivity as acceptors for peptidyl transferase. This Mycoplasmopsis synoviae (strain 53) (Mycoplasma synoviae) protein is Elongation factor P.